Here is a 533-residue protein sequence, read N- to C-terminus: Probable G-protein coupled receptor Mth-like 14 (533 aa).

Residues 1 to 23 (MNLGHWNFLLALISLQTFFNASA) form the signal peptide. 5 N-linked (GlcNAc...) asparagine glycosylation sites follow: asparagine 20, asparagine 29, asparagine 30, asparagine 36, and asparagine 47. Residues 24–242 (QISTVNNSSK…QVEEQIAFAK (219 aa)) are Extracellular-facing. Positions 86–108 (VQSPVDNPLDPADCSQREKYRKQ) are disordered. A disulfide bridge links cysteine 120 with cysteine 216. N-linked (GlcNAc...) asparagine glycans are attached at residues asparagine 133, asparagine 178, and asparagine 206. Residues 243-263 (VVFVAVLMLISMPCLLLVSYL) form a helical membrane-spanning segment. The Cytoplasmic segment spans residues 264–279 (HMTLRLLRNLHGLSLS). A helical transmembrane segment spans residues 280–300 (LMSLCLASGYFVHSVVHIYGI). The Extracellular portion of the chain corresponds to 301-303 (PNQ). The chain crosses the membrane as a helical span at residues 304–324 (GFIGYVIQFCILSYFFWYLCI). Residues 325–347 (CFNVLLNVWYKLPCCIQCSKSWA) are Cytoplasmic-facing. Residues 348–368 (TFNFACYAVFAFSGPATIVAL) form a helical membrane-spanning segment. At 369–395 (TVQKGLPGMPSYFLQGLTESIRDSQRY) the chain is on the extracellular side. The helical transmembrane segment at 396–416 (FIPPVSTILFLSFLLNIISFF) threads the bilayer. Topologically, residues 417 to 451 (GFQRISGYAKAEKNIQERKCLFDQQKYEDVKKDAK) are cytoplasmic. A helical transmembrane segment spans residues 452 to 472 (CVSLLGIIMVVSWLLEIITFY). At 473–480 (SGSNSNYL) the chain is on the extracellular side. The helical transmembrane segment at 481–501 (ILCDMVNGLQGVWVLLIFLVV) threads the bilayer. Residues 502 to 533 (RRRRTIILRWWYDRGSHEIEGTELQALSNSPT) lie on the Cytoplasmic side of the membrane.

It belongs to the G-protein coupled receptor 2 family. Mth subfamily.

The protein localises to the cell membrane. This Drosophila melanogaster (Fruit fly) protein is Probable G-protein coupled receptor Mth-like 14 (mthl14).